The chain runs to 545 residues: Membrane protein insertase YidC (545 aa).

A run of 4 helical transmembrane segments spans residues 350–370 (IIGN…AVLY), 424–444 (LPML…FASV), 461–481 (ADPY…QTYL), and 498–518 (PLVF…YWVV).

Belongs to the OXA1/ALB3/YidC family. Type 1 subfamily. Interacts with the Sec translocase complex via SecD. Specifically interacts with transmembrane segments of nascent integral membrane proteins during membrane integration.

The protein localises to the cell inner membrane. Its function is as follows. Required for the insertion and/or proper folding and/or complex formation of integral membrane proteins into the membrane. Involved in integration of membrane proteins that insert both dependently and independently of the Sec translocase complex, as well as at least some lipoproteins. Aids folding of multispanning membrane proteins. The polypeptide is Membrane protein insertase YidC (Neisseria gonorrhoeae (strain ATCC 700825 / FA 1090)).